Consider the following 460-residue polypeptide: Ammonium transporter Rh type C (460 aa).

Residues 1–9 (MIWNTNLRW) lie on the Cytoplasmic side of the membrane. A helical membrane pass occupies residues 10–30 (RLPVACLLLEVALIALFGVFV). Residues 31–61 (RYDMDADPHWVQEKVIKNLSTDLENEFYYRY) are Extracellular-facing. Asparagine 48 carries an N-linked (GlcNAc...) asparagine glycan. Residues 62 to 82 (PSFQDVHVMIFVGFGFLMTFL) traverse the membrane as a helical segment. Over 83 to 89 (QRYGYSS) the chain is Cytoplasmic. A helical transmembrane segment spans residues 90-110 (VGFNFLLAAFGIQWALLMQGW). Over 111 to 125 (LQSFDGRYILVDLEN) the chain is Extracellular. Residues 126 to 145 (LINADFCVGSVCVAFGAVLG) traverse the membrane as a helical segment. Topologically, residues 146-151 (KVSPVQ) are cytoplasmic. Residues 152–174 (LLIMTLFQVTLFSINEYILLNLL) traverse the membrane as a helical segment. At 175-179 (EVKDS) the chain is on the extracellular side. The helical transmembrane segment at 180-200 (GGSMTIHAFGAYFGLTVAWIL) threads the bilayer. Residues 201–219 (YRPNLHLSKERQSSTYHSD) are Cytoplasmic-facing. The chain crosses the membrane as a helical span at residues 220–240 (LFAMIGTLFLWMYWPSFNSAI). Residues 241 to 251 (SNHGDAQHRAA) are Extracellular-facing. A helical membrane pass occupies residues 252–272 (INTYCSLAACVLTSVALSSAL). The Cytoplasmic portion of the chain corresponds to 273–285 (HRKGKLDMVHIQN). Residues 286–303 (ATLAGGVGLGTVAELMVL) traverse the membrane as a helical segment. The Extracellular segment spans residues 304 to 306 (PFG). Residues 307-329 (SLIIGFVCGIVSTLGFVYLTPFL) traverse the membrane as a helical segment. Topologically, residues 330-346 (ESRLHIQDTCGVHNLHG) are cytoplasmic. The chain crosses the membrane as a helical span at residues 347–367 (IPGIIGGIAGAVTASIANIDL). Over 368 to 396 (YGEEGLAYAFGIERSKLNWSPNMQGRFQA) the chain is Extracellular. The chain crosses the membrane as a helical span at residues 397–417 (AGLFVSLAMALVGGVIVGVIL). Residues 418-460 (RLPFWGQAPDENCFEDAVYWEIPKEPKSTALRSEDSSIKPPEP) lie on the Cytoplasmic side of the membrane.

Belongs to the ammonium transporter (TC 2.A.49) family. Rh subfamily. As to quaternary structure, homotrimer. In terms of processing, N-glycosylated.

Its subcellular location is the apical cell membrane. It catalyses the reaction NH4(+)(in) = NH4(+)(out). The enzyme catalyses methylamine(out) = methylamine(in). The catalysed reaction is CO2(out) = CO2(in). Functionally, ammonium transporter involved in the maintenance of acid-base homeostasis. Transports ammonium and its related derivative methylammonium across the plasma membrane of epithelial cells likely contributing to renal transepithelial ammonia transport and ammonia metabolism. Postulated to primarily mediate an electroneutral bidirectional transport of NH3 ammonia species according to a mechanism that implies interaction of an NH4(+) ion with acidic residues of the pore entry followed by dissociation of NH4(+) into NH3 and H(+). As a result NH3 transits through the central pore and is protonated on the extracellular side reforming NH4(+). May act as a CO2 channel providing for renal acid secretion. This is Ammonium transporter Rh type C (RHCG) from Bos taurus (Bovine).